We begin with the raw amino-acid sequence, 307 residues long: UDP-3-O-acyl-N-acetylglucosamine deacetylase (307 aa).

His80, His239, and Asp243 together coordinate Zn(2+). The active-site Proton donor is His266.

This sequence belongs to the LpxC family. Zn(2+) serves as cofactor.

It carries out the reaction a UDP-3-O-[(3R)-3-hydroxyacyl]-N-acetyl-alpha-D-glucosamine + H2O = a UDP-3-O-[(3R)-3-hydroxyacyl]-alpha-D-glucosamine + acetate. It participates in glycolipid biosynthesis; lipid IV(A) biosynthesis; lipid IV(A) from (3R)-3-hydroxytetradecanoyl-[acyl-carrier-protein] and UDP-N-acetyl-alpha-D-glucosamine: step 2/6. Functionally, catalyzes the hydrolysis of UDP-3-O-myristoyl-N-acetylglucosamine to form UDP-3-O-myristoylglucosamine and acetate, the committed step in lipid A biosynthesis. This Neisseria meningitidis serogroup A / serotype 4A (strain DSM 15465 / Z2491) protein is UDP-3-O-acyl-N-acetylglucosamine deacetylase.